We begin with the raw amino-acid sequence, 291 residues long: Acetylglutamate kinase (291 aa).

Substrate is bound by residues 64–65 (GG), R86, and N190.

It belongs to the acetylglutamate kinase family. ArgB subfamily.

It is found in the cytoplasm. The catalysed reaction is N-acetyl-L-glutamate + ATP = N-acetyl-L-glutamyl 5-phosphate + ADP. It participates in amino-acid biosynthesis; L-arginine biosynthesis; N(2)-acetyl-L-ornithine from L-glutamate: step 2/4. Functionally, catalyzes the ATP-dependent phosphorylation of N-acetyl-L-glutamate. This chain is Acetylglutamate kinase, found in Leptospira borgpetersenii serovar Hardjo-bovis (strain JB197).